The sequence spans 121 residues: Large ribosomal subunit protein bL12 (121 aa).

It belongs to the bacterial ribosomal protein bL12 family. In terms of assembly, homodimer. Part of the ribosomal stalk of the 50S ribosomal subunit. Forms a multimeric L10(L12)X complex, where L10 forms an elongated spine to which 2 to 4 L12 dimers bind in a sequential fashion. Binds GTP-bound translation factors.

In terms of biological role, forms part of the ribosomal stalk which helps the ribosome interact with GTP-bound translation factors. Is thus essential for accurate translation. This is Large ribosomal subunit protein bL12 from Pseudomonas fluorescens (strain ATCC BAA-477 / NRRL B-23932 / Pf-5).